Reading from the N-terminus, the 87-residue chain is Small ribosomal subunit protein bS20 (87 aa).

Positions 1–27 (MANIKSAKKRAIQSEKRRQHNASRRSM) are disordered.

This sequence belongs to the bacterial ribosomal protein bS20 family.

Functionally, binds directly to 16S ribosomal RNA. The sequence is that of Small ribosomal subunit protein bS20 from Aeromonas salmonicida (strain A449).